The primary structure comprises 449 residues: Probable rhamnogalacturonase E (449 aa).

The N-terminal stretch at 1-21 (MRSKTFSVLSSCLLLIATVQG) is a signal peptide. A disulfide bridge links Cys42 with Cys68. N-linked (GlcNAc...) asparagine glycosylation is found at Asn53, Asn91, and Asn106. The Proton donor role is filled by Asp221. A disulfide bridge connects residues Cys223 and Cys240. Asn241 and Asn256 each carry an N-linked (GlcNAc...) asparagine glycan. His296 is a catalytic residue. Asn323 carries N-linked (GlcNAc...) asparagine glycosylation. 2 disulfide bridges follow: Cys346–Cys352 and Cys374–Cys383.

Belongs to the glycosyl hydrolase 28 family.

It localises to the secreted. The catalysed reaction is Endohydrolysis of alpha-D-GalA-(1-&gt;2)-alpha-L-Rha glycosidic bond in the rhamnogalacturonan I backbone with initial inversion of anomeric configuration releasing oligosaccharides with beta-D-GalA at the reducing end.. Its function is as follows. Pectinolytic enzymes consist of four classes of enzymes: pectine lyase, polygalacturonase, pectin methylesterase and rhamnogalacturonase. Hydrolyzes alpha-D-galacturonopyranosyl-(1,2)-alpha-L-rhamnopyranosyl linkages in the backbone of the hairy regions of pectins. In Aspergillus flavus (strain ATCC 200026 / FGSC A1120 / IAM 13836 / NRRL 3357 / JCM 12722 / SRRC 167), this protein is Probable rhamnogalacturonase E (rhgE).